A 212-amino-acid chain; its full sequence is RNA chaperone ProQ (212 aa).

Basic and acidic residues-rich tracts occupy residues 102–124 (ALKESKERVFASRRTNTKEEKAK) and 132–144 (RKADAAAKSDKPK). The interval 102–149 (ALKESKERVFASRRTNTKEEKAKQPRRPAPRKADAAAKSDKPKAAPKA) is disordered.

This sequence belongs to the ProQ family.

Its subcellular location is the cytoplasm. In terms of biological role, RNA chaperone with significant RNA binding, RNA strand exchange and RNA duplexing activities. This chain is RNA chaperone ProQ, found in Aeromonas hydrophila subsp. hydrophila (strain ATCC 7966 / DSM 30187 / BCRC 13018 / CCUG 14551 / JCM 1027 / KCTC 2358 / NCIMB 9240 / NCTC 8049).